Consider the following 404-residue polypeptide: Pyrophosphate--fructose 6-phosphate 1-phosphotransferase (404 aa).

G12 contributes to the diphosphate binding site. Position 121 (D121) interacts with Mg(2+). Substrate-binding positions include 149–151 (TID), 194–196 (MGR), E266, and 323–326 (YFSR). The Proton acceptor role is filled by D151.

It belongs to the phosphofructokinase type A (PFKA) family. PPi-dependent PFK group II subfamily. Clade 'P' sub-subfamily. As to quaternary structure, homodimer. Requires Mg(2+) as cofactor.

It is found in the cytoplasm. The enzyme catalyses beta-D-fructose 6-phosphate + diphosphate = beta-D-fructose 1,6-bisphosphate + phosphate + H(+). The protein operates within carbohydrate degradation; glycolysis; D-glyceraldehyde 3-phosphate and glycerone phosphate from D-glucose: step 3/4. Non-allosteric. Catalyzes the phosphorylation of D-fructose 6-phosphate, the first committing step of glycolysis. Uses inorganic phosphate (PPi) as phosphoryl donor instead of ATP like common ATP-dependent phosphofructokinases (ATP-PFKs), which renders the reaction reversible, and can thus function both in glycolysis and gluconeogenesis. Consistently, PPi-PFK can replace the enzymes of both the forward (ATP-PFK) and reverse (fructose-bisphosphatase (FBPase)) reactions. This is Pyrophosphate--fructose 6-phosphate 1-phosphotransferase from Propionibacterium freudenreichii subsp. shermanii (strain ATCC 9614 / DSM 4902 / CIP 103027 / NCIMB 8099 / CIRM-BIA1).